Reading from the N-terminus, the 1038-residue chain is P3N-PIPO polyprotein (1038 aa).

Residues 170-313 (LVAKSDFDDL…AGDVGRTMHY (144 aa)) enclose the Peptidase S30 domain. Catalysis depends on for P1 proteinase activity residues His-224, Glu-233, and Ser-266. Positions 365-368 (KMAC) match the Involved in interaction with stylet and aphid transmission motif. The Involved in virions binding and aphid transmission motif lies at 622-624 (PTK). The Peptidase C6 domain maps to 648–770 (MYIAKEGYCY…EGEMKWYRVG (123 aa)). Catalysis depends on for helper component proteinase activity residues Cys-656 and His-729.

This sequence belongs to the potyviridae P3N-PIPO polyprotein family. Interacts (via PIPO domain) with host PCaP1 protein; this interaction may help to anchor the movement complex to the plasma membrane from which the complex could move to the plasmodesmata. Potyviral RNA is expressed as two polyproteins which undergo post-translational proteolytic processing. Genome polyprotein is processed by NIa-pro, P1 and HC-pro proteinases resulting in the production of at least ten individual proteins. P3N-PIPO is cleaved by P1 and HC-pro proteinases resulting in the production of three individual proteins. The P1 proteinase and the HC-pro cleave only their respective C-termini autocatalytically.

The protein localises to the host cell junction. It is found in the host plasmodesma. The catalysed reaction is Hydrolyzes a Gly-|-Gly bond at its own C-terminus, commonly in the sequence -Tyr-Xaa-Val-Gly-|-Gly, in the processing of the potyviral polyprotein.. Required for aphid transmission and also has proteolytic activity. Only cleaves a Gly-Gly dipeptide at its own C-terminus. Interacts with virions and aphid stylets. Acts as a suppressor of RNA-mediated gene silencing, also known as post-transcriptional gene silencing (PTGS), a mechanism of plant viral defense that limits the accumulation of viral RNAs. May have RNA-binding activity. Functionally, allows efficient cell to cell propagation, by bypassing the host cell wall barrier. Transports viral genome to neighboring plant cells directly through plasmosdesmata, without any budding. The protein is P3N-PIPO polyprotein of Beet mosaic virus (BtMV).